Here is a 316-residue protein sequence, read N- to C-terminus: Phosphoglycerate mutase-like protein AT74 (316 aa).

H17 acts as the Tele-phosphohistidine intermediate in catalysis. E106 functions as the Proton donor/acceptor in the catalytic mechanism. The segment at 275-316 is disordered; it reads KECETEATEDREEEEEEEGKRVNLLTSSEYSNEPELYNGQCC. Residues 279-291 show a composition bias toward acidic residues; that stretch reads TEATEDREEEEEE.

The protein belongs to the phosphoglycerate mutase family. Expressed in roots, leaves, stems, flowers and siliques.

Phosphoglycerate mutase-like protein lacking PGM activity. May play a role in carbohydrates metabolism. This Arabidopsis thaliana (Mouse-ear cress) protein is Phosphoglycerate mutase-like protein AT74.